A 416-amino-acid polypeptide reads, in one-letter code: Phosphatidylinositol 5-phosphate 4-kinase type-2 gamma (416 aa).

One can recognise a PIPK domain in the interval 38 to 415; it reads ASDPMLSVFM…RFREFISNIF (378 aa).

Phosphorylated, phosphorylation is induced by EGF.

The protein localises to the endoplasmic reticulum. It is found in the cytoplasm. The enzyme catalyses a 1,2-diacyl-sn-glycero-3-phospho-(1D-myo-inositol-5-phosphate) + ATP = a 1,2-diacyl-sn-glycero-3-phospho-(1D-myo-inositol-4,5-bisphosphate) + ADP + H(+). The catalysed reaction is 1,2-dihexadecanoyl-sn-glycero-3-phospho-(1D-myo-inositol-5-phosphate) + ATP = 1,2-dihexadecanoyl-sn-glycero-3-phospho-(1D-myo-inositol-4,5-bisphosphate) + ADP + H(+). It carries out the reaction 1,2-dihexadecanoyl-sn-glycero-3-phospho-(1D-myo-inositol-5-phosphate) + GTP = 1,2-dihexadecanoyl-sn-glycero-3-phospho-(1D-myo-inositol-4,5-bisphosphate) + GDP + H(+). In terms of biological role, phosphatidylinositol 5-phosphate 4-kinase with low enzymatic activity. May be a GTP sensor, has higher GTP-dependent kinase activity than ATP-dependent kinase activity. This chain is Phosphatidylinositol 5-phosphate 4-kinase type-2 gamma (pip4k2c), found in Danio rerio (Zebrafish).